We begin with the raw amino-acid sequence, 985 residues long: MSEQERVQECLRKEIRSLLISTKDGLTPQQLEKEYLLMVGNHLPLRILGYRSTMELVLDMPDVVTVSPCGDGTIILRAIPDESTKGIANLVAKQRSSHKVRNSMQKGRPSVCSGSSSRRRVPYRGRVPPILPAVVKSELKDLLALSPVLLSDFEKAFARRFGRSFQYVQYGFLSMFEVLNAASDVISVEQTRAGSLLMLKRSISEEKQRGWPAVTKGGKMFTQPFRMKQQGSYSTGSPVAKACFSQPTSNMEPPKQILNAEKTFKSNVVETSRLNHTEKLNQLENTFKSVISQIGPGGTINPELKHKLRFVVSKFPEGLLISKLLREFEIMFKEQLSPKQLGFLNVTELVGALSDILRVEFREGEQDLLVFDANMKPLASVQSDKKIDVKACVSSPPRNSLSTAAVKETAWDCLPKNHREPEQKICKKPNLVVKPLQLQVGVNKSELNLAMANHDIPPDAVRDKKLCRLPPLDTSTLVGVFVEYIISPSQFYIRIYSRDSSELLEDMMIEMRRCYSNQLVSDRYAMPEYFIQPGHLCCVRISEDKWWYRVIIHRVLGKQEVEVFYPDFGNIGTVQKSSLRFLKWCYTKLPAQAIPCSLAWVRPVEEHWTSRAIIQFQKLCGLKPLVGVVDEYVDGILNIFLCDTSSNEDVYFHHVLRTEGHAIVCRENVPSKGFRELNPLALYTKSSAGPEDVVLTELGCPSQQHYFNEDREISPQSKENELPTLDEIPIGMPCLESVTIGDDVWDENWLPLQAKMGKGGDAPSHLFTSSRGGKKPYLSCKEMPQKDWCFSAPKDMWDDSWQPSSLVNGMKVEVQKQEELSAQEKNIGTTRSQKQPNLESSSDSPTLPKLEEFYISLVESQQSAEGSQFEPSSIQTQVKQMQLSTAALSTTPAAVDSPEKHSGSVESSPESLKNDFSSSHAITVFKDKSHGAMDQLSLILSPEHQISQKLYIPRSTATAALGAAARLATSRRLLHWYPSVKRMEA.

Residues 7–80 form the HTH OST-type 1 domain; the sequence is VQECLRKEIR…DGTIILRAIP (74 aa). The segment at 98-119 is disordered; sequence HKVRNSMQKGRPSVCSGSSSRR. Residues 107-116 are compositionally biased toward low complexity; it reads GRPSVCSGSS. HTH OST-type domains follow at residues 127-202 and 300-374; these read VPPI…LKRS and INPE…FDAN. The Tudor domain occupies 530-589; sequence FIQPGHLCCVRISEDKWWYRVIIHRVLGKQEVEVFYPDFGNIGTVQKSSLRFLKWCYTKL. 2 disordered regions span residues 818–846 and 889–915; these read EELS…DSPT and STTP…LKND. A compositionally biased stretch (polar residues) spans 823-845; sequence QEKNIGTTRSQKQPNLESSSDSP. The residue at position 897 (S897) is a Phosphoserine. A compositionally biased stretch (polar residues) spans 904-915; that stretch reads SVESSPESLKND.

This sequence belongs to the TDRD5 family.

It localises to the cytoplasm. In terms of biological role, required during spermiogenesis to participate in the repression transposable elements and prevent their mobilization, which is essential for the germline integrity. Probably acts via the piRNA metabolic process, which mediates the repression of transposable elements during meiosis by forming complexes composed of piRNAs and Piwi proteins and govern the methylation and subsequent repression of transposons. Required for chromatoid body (CB) assembly. This is Tudor domain-containing protein 5 (TDRD5) from Canis lupus familiaris (Dog).